A 473-amino-acid polypeptide reads, in one-letter code: Cell division protein FtsP (473 aa).

The segment at residues 1-27 is a signal peptide (tat-type signal); it reads MSLSRRQFIQASGLAMCLGALPFAVQA.

This sequence belongs to the FtsP family. In terms of processing, predicted to be exported by the Tat system. The position of the signal peptide cleavage has not been experimentally proven.

Its subcellular location is the periplasm. Functionally, cell division protein that is required for growth during stress conditions. May be involved in protecting or stabilizing the divisomal assembly under conditions of stress. This is Cell division protein FtsP from Xenorhabdus nematophila (strain ATCC 19061 / DSM 3370 / CCUG 14189 / LMG 1036 / NCIMB 9965 / AN6).